The chain runs to 436 residues: Ribosome biogenesis protein WDR12 homolog (436 aa).

A ubiquitin-like (UBL) domain region spans residues 13 to 97 (VRVRFLTKLP…ERVLELEYVK (85 aa)). WD repeat units follow at residues 109 to 147 (PHDDWVSAVDGSNPSFVLTGCYDGLARIWRDASECTHIL), 149 to 193 (GHSD…SVPK), 203 to 242 (GHTSSVQSVAVDPSTNMICSGSWDNSIKLWSVEGSEEDGD), 273 to 311 (GHTQCVSAVTWPERQTIYSASWDHSVRQWDVQTGKETWN), 313 to 353 (VSGK…TLAP), 359 to 399 (SHKS…PLAS), and 402 to 436 (SHKDKVLCADWWKGDSVISGGADSKLCIASGIEIV). The disordered stretch occupies residues 240 to 262 (DGDTVSVKKRRTNSDSSGPEESL).

It belongs to the WD repeat WDR12/YTM1 family.

It is found in the nucleus. The protein localises to the nucleolus. Its subcellular location is the nucleoplasm. Its function is as follows. Required for maturation of ribosomal RNAs and formation of the large ribosomal subunit. In Oryza sativa subsp. japonica (Rice), this protein is Ribosome biogenesis protein WDR12 homolog.